A 114-amino-acid chain; its full sequence is Non-specific lipid-transfer protein 2 (114 aa).

A signal peptide spans 1 to 23; it reads MEMVNKIACFVLLCMVVVAPHAE. Cystine bridges form between Cys-27–Cys-73, Cys-37–Cys-50, Cys-51–Cys-96, and Cys-71–Cys-110.

Belongs to the plant LTP family.

Plant non-specific lipid-transfer proteins transfer phospholipids as well as galactolipids across membranes. May play a role in wax or cutin deposition in the cell walls of expanding epidermal cells and certain secretory tissues. The chain is Non-specific lipid-transfer protein 2 from Solanum chilense (Tomato).